Here is a 72-residue protein sequence, read N- to C-terminus: Thiostrepton (72 aa).

The propeptide occupies M1 to M55. The segment at residues I56–T67 is a cross-link (4-(1-hydroxyethyl)-7-isoleucino-2-(threonin-O3-ylcarbonyl)-7,8-dihydroquinolin-8-ol (Ile-Thr)). Residue S58 is modified to 2,3-didehydroalanine (Ser). Positions S60–C61 form a cross-link, thiazole-4-carboxylic acid (Ser-Cys). The 5-amino-piperideine-2,5-dicarboxylic acid (Ser-Cys) (with S-69) cross-link spans S60 to C68. The segment at residues S60–S69 is a cross-link (5-amino-piperideine-2,5-dicarboxylic acid (Ser-Ser) (with C-68)). T63 is subject to (Z)-2,3-didehydrobutyrine. Residues T63–C64 constitute a cross-link ((4S)-thiazoline-4-carboxylic acid (Thr-Cys)). Residue I65 is modified to (3S,4R)-3,4-dihydroxyisoleucine. A cross-link (thiazole-4-carboxylic acid (Ile-Cys)) is located at residues I65–C66. Positions T67 to C68 form a cross-link, thiazole-4-carboxylic acid (Thr-Cys). Positions S69–C70 form a cross-link, thiazole-4-carboxylic acid (Ser-Cys). 2,3-didehydroalanine (Ser) is present on residues S71 and S72. A Serine amide modification is found at S72.

It belongs to the thiocillin family. In terms of processing, maturation of thiazole and oxazole containing antibiotics involves the enzymatic condensation of a Cys, Ser or Thr with the alpha-carbonyl of the preceding amino acid to form a thioether or ether bond, then dehydration to form a double bond with the alpha-amino nitrogen. Thiazoline or oxazoline ring are dehydrogenated to form thiazole or oxazole rings. Maturation of pyridinyl containing antibiotics involves the cross-linking of a Ser and a Cys-Ser pair usually separated by 7 or 8 residues along the peptide chain. The Ser residues are dehydrated to didehydroalanines, then bonded between their beta carbons. The alpha carbonyl of the Cys condenses with alpha carbon of the first Ser to form a pyridinyl ring. The ring may be multiply dehydrogenated to form a pyridine ring with loss of the amino nitrogen of the first Ser. Post-translationally, the amidation of Ser-72 probably does not occur by the same mechanism, oxidative cleavage of glycine, as in eukaryotes. In terms of processing, the structure of the 2,3-didehydrobutyrin is shown to be Z-isomer.

It localises to the secreted. Functionally, has bacteriocidal activity. Inhibits bacterial protein biosynthesis by acting on the elongation factor Tu (EF-Tu). The sequence is that of Thiostrepton (tpdA) from Streptomyces azureus.